Consider the following 425-residue polypeptide: Enolase (425 aa).

Gln163 contacts (2R)-2-phosphoglycerate. Residue Glu205 is the Proton donor of the active site. Residues Asp242, Glu285, and Asp312 each contribute to the Mg(2+) site. Residues Lys337, Arg366, Ser367, and Lys388 each contribute to the (2R)-2-phosphoglycerate site. Lys337 acts as the Proton acceptor in catalysis.

It belongs to the enolase family. Mg(2+) serves as cofactor.

The protein localises to the cytoplasm. The protein resides in the secreted. It localises to the cell surface. The catalysed reaction is (2R)-2-phosphoglycerate = phosphoenolpyruvate + H2O. The protein operates within carbohydrate degradation; glycolysis; pyruvate from D-glyceraldehyde 3-phosphate: step 4/5. Functionally, catalyzes the reversible conversion of 2-phosphoglycerate (2-PG) into phosphoenolpyruvate (PEP). It is essential for the degradation of carbohydrates via glycolysis. The sequence is that of Enolase from Granulibacter bethesdensis (strain ATCC BAA-1260 / CGDNIH1).